Here is a 637-residue protein sequence, read N- to C-terminus: Biosynthetic arginine decarboxylase (637 aa).

K107 carries the post-translational modification N6-(pyridoxal phosphate)lysine. Position 289 to 299 (289 to 299 (LDVGGGLGVDY)) interacts with substrate.

It belongs to the Orn/Lys/Arg decarboxylase class-II family. SpeA subfamily. Requires Mg(2+) as cofactor. Pyridoxal 5'-phosphate is required as a cofactor.

It carries out the reaction L-arginine + H(+) = agmatine + CO2. Its function is as follows. Catalyzes the biosynthesis of agmatine from arginine. The polypeptide is Biosynthetic arginine decarboxylase (Thermosynechococcus vestitus (strain NIES-2133 / IAM M-273 / BP-1)).